Reading from the N-terminus, the 360-residue chain is Histidinol-phosphate aminotransferase 2 (360 aa).

At lysine 218 the chain carries N6-(pyridoxal phosphate)lysine.

Belongs to the class-II pyridoxal-phosphate-dependent aminotransferase family. Histidinol-phosphate aminotransferase subfamily. In terms of assembly, homodimer. Requires pyridoxal 5'-phosphate as cofactor.

The enzyme catalyses L-histidinol phosphate + 2-oxoglutarate = 3-(imidazol-4-yl)-2-oxopropyl phosphate + L-glutamate. It participates in amino-acid biosynthesis; L-histidine biosynthesis; L-histidine from 5-phospho-alpha-D-ribose 1-diphosphate: step 7/9. This is Histidinol-phosphate aminotransferase 2 from Nitrosococcus oceani (strain ATCC 19707 / BCRC 17464 / JCM 30415 / NCIMB 11848 / C-107).